Here is a 584-residue protein sequence, read N- to C-terminus: Pentalenolactone D synthase (584 aa).

FAD-binding positions include 55 to 56 (IG), 77 to 78 (DG), 85 to 86 (TW), 97 to 98 (DV), tyrosine 103, valine 147, and methionine 486.

It belongs to the FAD-binding monooxygenase family. It depends on FAD as a cofactor.

The catalysed reaction is 1-deoxy-11-oxopentalenate + NADPH + O2 + H(+) = pentalenolactone D + NADP(+) + H2O. It functions in the pathway antibiotic biosynthesis; pentalenolactone biosynthesis. In terms of biological role, catalyzes the flavin-dependent Baeyer-Villiger oxidation of 1-deoxy-11-oxopentalenic acid to pentalenolactone D in the biosynthesis of pentalenolactone antibiotic. The protein is Pentalenolactone D synthase (penE) of Streptomyces exfoliatus (Streptomyces hydrogenans).